Consider the following 557-residue polypeptide: Hydroxylamine reductase (557 aa).

[4Fe-4S] cluster contacts are provided by Cys4, Cys7, Cys19, and Cys26. His253, Glu277, Cys321, Cys408, Cys436, Cys461, Glu495, and Lys497 together coordinate hybrid [4Fe-2O-2S] cluster. Position 408 is a cysteine persulfide (Cys408).

The protein belongs to the HCP family. The cofactor is [4Fe-4S] cluster. It depends on hybrid [4Fe-2O-2S] cluster as a cofactor.

It is found in the cytoplasm. The enzyme catalyses A + NH4(+) + H2O = hydroxylamine + AH2 + H(+). Functionally, catalyzes the reduction of hydroxylamine to form NH(3) and H(2)O. This chain is Hydroxylamine reductase, found in Acidithiobacillus ferrooxidans (strain ATCC 53993 / BNL-5-31) (Leptospirillum ferrooxidans (ATCC 53993)).